The following is a 498-amino-acid chain: Lysine--tRNA ligase (498 aa).

Residues Glu407 and Glu414 each coordinate Mg(2+).

It belongs to the class-II aminoacyl-tRNA synthetase family. Homodimer. Mg(2+) is required as a cofactor.

It is found in the cytoplasm. It catalyses the reaction tRNA(Lys) + L-lysine + ATP = L-lysyl-tRNA(Lys) + AMP + diphosphate. This is Lysine--tRNA ligase from Sinorhizobium medicae (strain WSM419) (Ensifer medicae).